Consider the following 701-residue polypeptide: Transcriptional regulator Kaiso (701 aa).

Residues 32-94 (CDVTVIVEDR…IYSSKIVRVR (63 aa)) form the BTB domain. Disordered regions lie at residues 128 to 158 (GAGG…SPLP) and 181 to 311 (SSDD…QNQH). Positions 245–258 (TPSSQVQLTQNSLP) are enriched in polar residues. Residues 259–273 (TNQQSSKNTSSTTQK) are compositionally biased toward low complexity. Positions 278-311 (VNANISKNPTPAANGFLSPTAQKQGTPNAVQNQH) are enriched in polar residues. Residues 470-609 (AKLDLDGLPN…QIRQYAYVNN (140 aa)) form a required for methylation dependent DNA-binding region. C2H2-type zinc fingers lie at residues 501 to 523 (YICI…FNVH), 529 to 551 (YPCR…EIHH), and 557 to 580 (YQCL…RSVH). The interval 519–701 (HFNVHSWEKK…EFEFVIPESY (183 aa)) is required for sequence specific DNA-binding. A disordered region spans residues 644 to 664 (DIDPDEPQQPASEGNHANSAT). Residues 652 to 664 (QPASEGNHANSAT) are compositionally biased toward polar residues.

As to quaternary structure, self associates. Interacts with tcf7l1-A, leading to repression of tcf7l1-A target genes. Interacts with ctnnd1, and this interaction may inhibit DNA-binding. Interacts with ncor1.

It is found in the nucleus. Functionally, transcriptional regulator with bimodal DNA-binding specificity. Binds to methylated CpG dinucleotides in the consensus sequence 5'-CGCG-3' and also binds to the non-methylated consensus sequence 5'-CTGCNA-3'. May recruit the N-CoR repressor complex to promote histone deacetylation and the formation of repressive chromatin structures in target gene promoters. Contributes to the repression of target genes of the Wnt signaling pathway and to the methylation-dependent repression of zygotic transcription prior to the mid-blastula transition (MBT). Also required for gastrulation movements. This Xenopus laevis (African clawed frog) protein is Transcriptional regulator Kaiso (zbtb33).